Consider the following 238-residue polypeptide: uncharacterized protein (238 aa).

Disordered regions lie at residues 1 to 51 and 214 to 238; these read MPCT…ASCA and ITVE…FPTA. Residues 16-31 are compositionally biased toward low complexity; sequence ATWRTARPAPRRCGSC.

This is an uncharacterized protein from Streptomyces griseus.